Here is a 259-residue protein sequence, read N- to C-terminus: Ras-related protein Rab-34 (259 aa).

Met-1 carries the post-translational modification N-acetylmethionine. GTP-binding residues include Ser-62, Val-63, Gly-64, Lys-65, Thr-66, Asp-78, Tyr-81, and Thr-84. Thr-66 is a binding site for Mg(2+). Residues 71-89 carry the Switch 1 motif; that stretch reads RFCKDTFDKNYKATIGVDF. The Mg(2+) site is built by Thr-84 and Asp-107. Positions 108-127 match the Switch 2 motif; sequence TAGQERFKCIASTYYRGAQA. Gly-110, Lys-167, Asp-169, and Ser-198 together coordinate GTP. Ser-241 bears the Phosphoserine mark. 2 S-geranylgeranyl cysteine lipidation sites follow: Cys-257 and Cys-258.

Belongs to the small GTPase superfamily. Rab family. Interacts with RILP. The GTP-bound form interacts with REP15. Mg(2+) serves as cofactor.

The protein resides in the cytoplasm. It localises to the golgi apparatus. It is found in the cytoplasmic vesicle. Its subcellular location is the phagosome. The protein localises to the phagosome membrane. The protein resides in the cell projection. It localises to the cilium. It is found in the cytoskeleton. Its subcellular location is the microtubule organizing center. The protein localises to the centrosome. The protein resides in the centriole. It catalyses the reaction GTP + H2O = GDP + phosphate + H(+). Its activity is regulated as follows. Regulated by guanine nucleotide exchange factors (GEFs) which promote the exchange of bound GDP for free GTP. Regulated by GTPase activating proteins (GAPs) which increase the GTP hydrolysis activity. Inhibited by GDP dissociation inhibitors (GDIs). Its function is as follows. The small GTPases Rab are key regulators of intracellular membrane trafficking, from the formation of transport vesicles to their fusion with membranes. Rabs cycle between an inactive GDP-bound form and an active GTP-bound form that is able to recruit to membranes different sets of downstream effectors directly responsible for vesicle formation, movement, tethering and fusion. RAB34 transports protein involved in the redistribution of lysosomes to the peri-Golgi region. Plays a role in the maturation of phagosomes that engulf pathogens, such as S.aureus and M.tuberculosis. Plays a role in the fusion of phagosomes with lysosomes. Involved in ciliogenesis. In particular, it is required for early steps of the intracellular cilium assembly pathway initiated by trafficking and docking of ciliary vesicles to the centrioles in the cytoplasm, followed by axoneme formation in the cytoplasm. After axoneme elongation, the centrioles migrate close to the cell surface so that ciliary vesicles can fuse with the plasma membrane to expose cilia to the extracellular space. It seems dispensable for ciliogenesis via the extracellular pathway where cilium assembly begins after migration and docking of the centriole to the plasma membrane. Also acts as a positive regulator of hedgehog signaling and regulates ciliary function. In Rattus norvegicus (Rat), this protein is Ras-related protein Rab-34.